We begin with the raw amino-acid sequence, 210 residues long: Thiamine-phosphate synthase (210 aa).

Residues 39 to 43 (QLREK) and Asn-71 contribute to the 4-amino-2-methyl-5-(diphosphooxymethyl)pyrimidine site. Residues Asp-72 and Asp-91 each coordinate Mg(2+). Residue Ser-110 participates in 4-amino-2-methyl-5-(diphosphooxymethyl)pyrimidine binding. 134-136 (TPT) serves as a coordination point for 2-[(2R,5Z)-2-carboxy-4-methylthiazol-5(2H)-ylidene]ethyl phosphate. Lys-137 provides a ligand contact to 4-amino-2-methyl-5-(diphosphooxymethyl)pyrimidine. Position 163 (Gly-163) interacts with 2-[(2R,5Z)-2-carboxy-4-methylthiazol-5(2H)-ylidene]ethyl phosphate.

Belongs to the thiamine-phosphate synthase family. Mg(2+) serves as cofactor.

The catalysed reaction is 2-[(2R,5Z)-2-carboxy-4-methylthiazol-5(2H)-ylidene]ethyl phosphate + 4-amino-2-methyl-5-(diphosphooxymethyl)pyrimidine + 2 H(+) = thiamine phosphate + CO2 + diphosphate. It carries out the reaction 2-(2-carboxy-4-methylthiazol-5-yl)ethyl phosphate + 4-amino-2-methyl-5-(diphosphooxymethyl)pyrimidine + 2 H(+) = thiamine phosphate + CO2 + diphosphate. The enzyme catalyses 4-methyl-5-(2-phosphooxyethyl)-thiazole + 4-amino-2-methyl-5-(diphosphooxymethyl)pyrimidine + H(+) = thiamine phosphate + diphosphate. The protein operates within cofactor biosynthesis; thiamine diphosphate biosynthesis; thiamine phosphate from 4-amino-2-methyl-5-diphosphomethylpyrimidine and 4-methyl-5-(2-phosphoethyl)-thiazole: step 1/1. In terms of biological role, condenses 4-methyl-5-(beta-hydroxyethyl)thiazole monophosphate (THZ-P) and 2-methyl-4-amino-5-hydroxymethyl pyrimidine pyrophosphate (HMP-PP) to form thiamine monophosphate (TMP). The protein is Thiamine-phosphate synthase of Campylobacter jejuni subsp. jejuni serotype O:6 (strain 81116 / NCTC 11828).